The chain runs to 1791 residues: Brefeldin A-inhibited guanine nucleotide-exchange protein 2 (1791 aa).

N-acetylmethionine is present on Met-1. The segment at 2–224 (QESQTKSMFV…KPQSPVIQAT (223 aa)) is DCB; DCB:DCB domain and DCB:HUS domain interaction. Disordered stretches follow at residues 208–292 (LEKP…DNGA) and 311–350 (AAEKQGLPEPDQAPGVPECQECTVPPAVDENSQTNGIADD). Ser-214, Ser-218, and Ser-227 each carry phosphoserine. Over residues 214-225 (SKPQSPVIQATA) the composition is skewed to polar residues. Positions 233-243 (LKQSQAQSKPT) are enriched in polar residues. A Phosphothreonine modification is found at Thr-244. Basic and acidic residues predominate over residues 244–257 (TPEKTELPNGDHAR). Ser-277 carries the post-translational modification Phosphoserine. Phosphoserine is present on residues Ser-355 and Ser-356. The tract at residues 515 to 535 (ADAQCVVDIYVNYDCDLNAAN) is HUS; DCB:HUS domain interaction. Ser-621 is modified (phosphoserine). Residue Thr-623 is modified to Phosphothreonine. Ser-624 is subject to Phosphoserine. The residue at position 633 (Thr-633) is a Phosphothreonine. An SEC7 domain is found at 661-792 (FNKKPKRGIQ…IIMLTTDLHS (132 aa)). A phosphoserine mark is found at Ser-707, Ser-1518, Ser-1520, Ser-1521, Ser-1532, Ser-1535, Ser-1541, and Ser-1788.

Homodimer. Interacts with ARFGEF1/BIG1; both proteins are probably part of the same or very similar macromolecular complexes. Interacts with PRKAR1A, PRKAR2A, PRKAR1B, PRKAR2B, PPP1CC, PDE3A, TNFRSF1A, MYCBP and EXOC7. Interacts with GABRB1, GABRB2 and GABRB3. Post-translationally, in vitro phosphorylated by PKA reducing its GEF activity and dephosphorylated by phosphatase PP1. In terms of tissue distribution, expressed in brain (at protein level).

The protein localises to the cytoplasm. It is found in the membrane. It localises to the golgi apparatus. The protein resides in the perinuclear region. Its subcellular location is the trans-Golgi network. The protein localises to the endosome. It is found in the cytoskeleton. It localises to the microtubule organizing center. The protein resides in the centrosome. Its subcellular location is the cell projection. The protein localises to the dendrite. It is found in the cytoplasmic vesicle. It localises to the synapse. Inhibited by brefeldin A. Promotes guanine-nucleotide exchange on ARF1 and ARF3 and to a lower extent on ARF5 and ARF6. Promotes the activation of ARF1/ARF5/ARF6 through replacement of GDP with GTP. Involved in the regulation of Golgi vesicular transport. Required for the integrity of the endosomal compartment. Involved in trafficking from the trans-Golgi network (TGN) to endosomes and is required for membrane association of the AP-1 complex and GGA1. Seems to be involved in recycling of the transferrin receptor from recycling endosomes to the plasma membrane. Probably is involved in the exit of GABA(A) receptors from the endoplasmic reticulum. Involved in constitutive release of tumor necrosis factor receptor 1 via exosome-like vesicles; the function seems to involve PKA and specifically PRKAR2B. Proposed to act as A kinase-anchoring protein (AKAP) and may mediate crosstalk between Arf and PKA pathways. The chain is Brefeldin A-inhibited guanine nucleotide-exchange protein 2 (Arfgef2) from Rattus norvegicus (Rat).